The primary structure comprises 209 residues: Max dimerization protein 4 (209 aa).

Positions 6–23 are interaction with SIN3A and SIN3B; the sequence is LLLLLEAAEYLERRDREA. A bHLH domain is found at 53–105; sequence NNRSSHNELEKHRRAKLRLYLEQLKQLGPLGPDSTRHTTLSLLKRAKMHIKKL. Positions 137–209 are disordered; that stretch reads SVERVRTDST…CRRPGCPGLS (73 aa). Positions 153–163 are enriched in acidic residues; it reads DDSEQEVDIEG. Residues 185 to 195 show a composition bias toward polar residues; sequence SLQSSGCSDSS.

Efficient DNA binding requires dimerization with another bHLH protein. Binds DNA as a heterodimer with MAX. Interacts with SIN3A AND SIN3B. Interacts with RNF17.

The protein localises to the nucleus. Transcriptional repressor. Binds with MAX to form a sequence-specific DNA-binding protein complex which recognizes the core sequence 5'-CAC[GA]TG-3'. Antagonizes MYC transcriptional activity by competing for MAX and suppresses MYC dependent cell transformation. This is Max dimerization protein 4 (Mxd4) from Mus musculus (Mouse).